A 92-amino-acid chain; its full sequence is Ferredoxin-like protein in nif region (92 aa).

2 4Fe-4S ferredoxin-type domains span residues 2 to 28 and 29 to 65; these read ALKI…SLAG and PHFE…LADG. [4Fe-4S] cluster contacts are provided by cysteine 9, cysteine 12, cysteine 15, cysteine 19, cysteine 38, cysteine 41, cysteine 50, and cysteine 54.

The cofactor is [4Fe-4S] cluster.

Ferredoxins are iron-sulfur proteins that transfer electrons in a wide variety of metabolic reactions. In Azotobacter vinelandii, this protein is Ferredoxin-like protein in nif region.